The primary structure comprises 804 residues: Phenylalanine--tRNA ligase beta subunit (804 aa).

The region spanning 38–148 (RAAFRAFTIA…ENAPVGTSFA (111 aa)) is the tRNA-binding domain. A B5 domain is found at 401 to 476 (HTARVIDFPV…RIHGINRIDP (76 aa)). The Mg(2+) site is built by aspartate 454, aspartate 460, glutamate 463, and glutamate 464. An FDX-ACB domain is found at 710 to 803 (SLFQSLKRDY…VAKQTGGVLR (94 aa)).

It belongs to the phenylalanyl-tRNA synthetase beta subunit family. Type 1 subfamily. As to quaternary structure, tetramer of two alpha and two beta subunits. Requires Mg(2+) as cofactor.

Its subcellular location is the cytoplasm. It carries out the reaction tRNA(Phe) + L-phenylalanine + ATP = L-phenylalanyl-tRNA(Phe) + AMP + diphosphate + H(+). The sequence is that of Phenylalanine--tRNA ligase beta subunit from Brucella abortus (strain 2308).